Consider the following 357-residue polypeptide: UDP-N-acetylglucosamine--N-acetylmuramyl-(pentapeptide) pyrophosphoryl-undecaprenol N-acetylglucosamine transferase (357 aa).

Residues 15–17 (TGG), N124, R165, S194, and Q288 each bind UDP-N-acetyl-alpha-D-glucosamine.

The protein belongs to the glycosyltransferase 28 family. MurG subfamily.

It is found in the cell inner membrane. The catalysed reaction is di-trans,octa-cis-undecaprenyl diphospho-N-acetyl-alpha-D-muramoyl-L-alanyl-D-glutamyl-meso-2,6-diaminopimeloyl-D-alanyl-D-alanine + UDP-N-acetyl-alpha-D-glucosamine = di-trans,octa-cis-undecaprenyl diphospho-[N-acetyl-alpha-D-glucosaminyl-(1-&gt;4)]-N-acetyl-alpha-D-muramoyl-L-alanyl-D-glutamyl-meso-2,6-diaminopimeloyl-D-alanyl-D-alanine + UDP + H(+). The protein operates within cell wall biogenesis; peptidoglycan biosynthesis. In terms of biological role, cell wall formation. Catalyzes the transfer of a GlcNAc subunit on undecaprenyl-pyrophosphoryl-MurNAc-pentapeptide (lipid intermediate I) to form undecaprenyl-pyrophosphoryl-MurNAc-(pentapeptide)GlcNAc (lipid intermediate II). The sequence is that of UDP-N-acetylglucosamine--N-acetylmuramyl-(pentapeptide) pyrophosphoryl-undecaprenol N-acetylglucosamine transferase from Nostoc sp. (strain PCC 7120 / SAG 25.82 / UTEX 2576).